The sequence spans 173 residues: 3-hydroxydecanoyl-[acyl-carrier-protein] dehydratase (173 aa).

His-71 is an active-site residue.

Belongs to the thioester dehydratase family. FabA subfamily. In terms of assembly, homodimer.

The protein localises to the cytoplasm. It carries out the reaction a (3R)-hydroxyacyl-[ACP] = a (2E)-enoyl-[ACP] + H2O. The enzyme catalyses (3R)-hydroxydecanoyl-[ACP] = (2E)-decenoyl-[ACP] + H2O. The catalysed reaction is (2E)-decenoyl-[ACP] = (3Z)-decenoyl-[ACP]. It participates in lipid metabolism; fatty acid biosynthesis. Functionally, necessary for the introduction of cis unsaturation into fatty acids. Catalyzes the dehydration of (3R)-3-hydroxydecanoyl-ACP to E-(2)-decenoyl-ACP and then its isomerization to Z-(3)-decenoyl-ACP. Can catalyze the dehydratase reaction for beta-hydroxyacyl-ACPs with saturated chain lengths up to 16:0, being most active on intermediate chain length. The protein is 3-hydroxydecanoyl-[acyl-carrier-protein] dehydratase of Bradyrhizobium sp. (strain BTAi1 / ATCC BAA-1182).